Reading from the N-terminus, the 202-residue chain is Rho GDP-dissociation inhibitor (202 aa).

Ala-2 bears the N-acetylalanine mark. Residue Thr-27 is modified to Phosphothreonine. Position 40 is a phosphoserine (Ser-40).

This sequence belongs to the Rho GDI family.

The protein resides in the cytoplasm. Its function is as follows. Regulates the GDP/GTP exchange reaction of the Rho proteins by inhibiting the dissociation of GDP from them, and the subsequent binding of GTP to them. The protein is Rho GDP-dissociation inhibitor (RDI1) of Saccharomyces cerevisiae (strain ATCC 204508 / S288c) (Baker's yeast).